Reading from the N-terminus, the 504-residue chain is Anaerobic nitric oxide reductase transcription regulator NorR (504 aa).

The residue at position 57 (aspartate 57) is a 4-aspartylphosphate. The Sigma-54 factor interaction domain occupies 187–416; sequence MIGLSPGMTQ…LEHAIHRAVV (230 aa). Residues 215–222 and 278–287 contribute to the ATP site; these read GETGTGKE and ADNGTLFLDE. Residues 479–498 constitute a DNA-binding region (H-T-H motif); that stretch reads WAACARMLETDVANLHRLAK.

It participates in nitrogen metabolism; nitric oxide reduction. Functionally, required for the expression of anaerobic nitric oxide (NO) reductase, acts as a transcriptional activator for at least the norVW operon. Activation also requires sigma-54. In Escherichia coli (strain 55989 / EAEC), this protein is Anaerobic nitric oxide reductase transcription regulator NorR.